A 300-amino-acid polypeptide reads, in one-letter code: 33 kDa chaperonin (300 aa).

Cystine bridges form between C235/C237 and C269/C272.

It belongs to the HSP33 family. Under oxidizing conditions two disulfide bonds are formed involving the reactive cysteines. Under reducing conditions zinc is bound to the reactive cysteines and the protein is inactive.

The protein resides in the cytoplasm. Functionally, redox regulated molecular chaperone. Protects both thermally unfolding and oxidatively damaged proteins from irreversible aggregation. Plays an important role in the bacterial defense system toward oxidative stress. The polypeptide is 33 kDa chaperonin (Pseudomonas fluorescens (strain Pf0-1)).